Reading from the N-terminus, the 61-residue chain is Small ribosomal subunit protein uS14 (61 aa).

Positions 24, 27, 40, and 43 each coordinate Zn(2+).

The protein belongs to the universal ribosomal protein uS14 family. Zinc-binding uS14 subfamily. In terms of assembly, part of the 30S ribosomal subunit. Contacts proteins S3 and S10. It depends on Zn(2+) as a cofactor.

Binds 16S rRNA, required for the assembly of 30S particles and may also be responsible for determining the conformation of the 16S rRNA at the A site. The chain is Small ribosomal subunit protein uS14 from Geotalea uraniireducens (strain Rf4) (Geobacter uraniireducens).